The chain runs to 169 residues: Peptide deformylase (169 aa).

2 residues coordinate Fe cation: Cys-91 and His-133. The active site involves Glu-134. His-137 serves as a coordination point for Fe cation.

It belongs to the polypeptide deformylase family. Requires Fe(2+) as cofactor.

It catalyses the reaction N-terminal N-formyl-L-methionyl-[peptide] + H2O = N-terminal L-methionyl-[peptide] + formate. Its function is as follows. Removes the formyl group from the N-terminal Met of newly synthesized proteins. Requires at least a dipeptide for an efficient rate of reaction. N-terminal L-methionine is a prerequisite for activity but the enzyme has broad specificity at other positions. This Salmonella arizonae (strain ATCC BAA-731 / CDC346-86 / RSK2980) protein is Peptide deformylase.